Here is a 553-residue protein sequence, read N- to C-terminus: Phospholipase B-like 1 (553 aa).

Residues 1–38 (MTRGGPGGRPGLPQPPPLLLLLLLLPLLLVTAEPPKPA) form the signal peptide. The N-linked (GlcNAc...) (high mannose) asparagine; alternate glycan is linked to Asn71. An N-linked (GlcNAc...) (hybrid) asparagine; alternate glycan is attached at Asn71. Positions 209–227 (LSPTKNGSLKVFKRWDMGH) are cleaved as a propeptide — removed in mature form. 2 N-linked (GlcNAc...) (high mannose) asparagine; alternate glycosylation sites follow: Asn308 and Asn366. Asn308 and Asn366 each carry an N-linked (GlcNAc...) (hybrid) asparagine; alternate glycan. A glycan (N-linked (GlcNAc...) asparagine) is linked at Asn411. 2 disulfides stabilise this stretch: Cys470–Cys475 and Cys474–Cys489. Asn526 is a glycosylation site (N-linked (GlcNAc...) (high mannose) asparagine; alternate). Residue Asn526 is glycosylated (N-linked (GlcNAc...) (hybrid) asparagine; alternate).

It belongs to the phospholipase B-like family. In terms of assembly, may form a homodimer, each monomer is composed of a chain A and a chain B. The maturation cleavages that produces chains A and B are required to open the putative substrate binding pocket. Both chains A and B remain associated in the mature protein. As to expression, expressed in neutrophils and monocytes.

It is found in the lysosome. In view of the small size of the putative binding pocket, it has been proposed that it may act as an amidase or a peptidase. Exhibits a weak phospholipase activity, acting on various phospholipids, including phosphatidylcholine, phosphatidylinositol, phosphatidylethanolamine and lysophospholipids. This chain is Phospholipase B-like 1 (PLBD1), found in Homo sapiens (Human).